Consider the following 381-residue polypeptide: Putrescine N-methyltransferase 3 (381 aa).

The disordered stretch occupies residues 21-81; it reads MNGYQNGTSK…TISHDNGNEL (61 aa). 2 stretches are compositionally biased toward polar residues: residues 23-39 and 46-81; these read GYQNGTSKHQNGHQNGT and HQNGISEHQNGHQNGTSEHQNGHQNGTISHDNGNEL. The PABS domain maps to 92–329; that stretch reads PGWFSEFSAL…GVIGYMLCST (238 aa). Residues glutamine 123, glutamate 198, and 229-230 each bind S-adenosyl-L-methionine; that span reads DG. Catalysis depends on aspartate 248, which acts as the Proton acceptor. Residue tyrosine 317 participates in S-adenosyl-L-methionine binding.

The protein belongs to the class I-like SAM-binding methyltransferase superfamily. Putrescine methyltransferase family. In terms of tissue distribution, predominantly expressed in roots.

The catalysed reaction is putrescine + S-adenosyl-L-methionine = N-methylputrescine + S-adenosyl-L-homocysteine + H(+). It functions in the pathway alkaloid biosynthesis; nicotine biosynthesis. Involved in the biosynthesis of pyridine alkaloid natural products, leading mainly to the production of anabasine, anatabine, nicotine and nornicotine, effective deterrents against herbivores with antiparasitic and pesticide properties (neurotoxins); nornicotine serves as the precursor in the synthesis of the carcinogen compound N'-nitrosonornicotine (NNN). Methyltransferase that mediates the conversion of putrescine to N-methylputrescine. Promotes leaves ripening. The polypeptide is Putrescine N-methyltransferase 3 (Nicotiana tabacum (Common tobacco)).